A 348-amino-acid chain; its full sequence is sn-glycerol-3-phosphate import ATP-binding protein UgpC 3 (348 aa).

The ABC transporter domain occupies 4–234; it reads INIIDVKKNY…PASLFVASFI (231 aa). 36-43 is an ATP binding site; sequence GPSGCGKS.

This sequence belongs to the ABC transporter superfamily. sn-glycerol-3-phosphate importer (TC 3.A.1.1.3) family. In terms of assembly, the complex is composed of two ATP-binding proteins (UgpC), two transmembrane proteins (UgpA and UgpE) and a solute-binding protein (UgpB).

Its subcellular location is the cell inner membrane. The enzyme catalyses sn-glycerol 3-phosphate(out) + ATP + H2O = sn-glycerol 3-phosphate(in) + ADP + phosphate + H(+). In terms of biological role, part of the ABC transporter complex UgpBAEC involved in sn-glycerol-3-phosphate (G3P) import. Responsible for energy coupling to the transport system. This chain is sn-glycerol-3-phosphate import ATP-binding protein UgpC 3, found in Rhizobium johnstonii (strain DSM 114642 / LMG 32736 / 3841) (Rhizobium leguminosarum bv. viciae).